We begin with the raw amino-acid sequence, 569 residues long: uncharacterized protein (569 aa).

A helical membrane pass occupies residues 2–22 (VVIAALLGSLAVLAFLFYLWY).

It localises to the membrane. This is an uncharacterized protein from Mycoplasma pneumoniae (strain ATCC 29342 / M129 / Subtype 1) (Mycoplasmoides pneumoniae).